A 340-amino-acid chain; its full sequence is tRNA (cytosine(34)-C(5))-methyltransferase, mitochondrial (340 aa).

S-adenosyl-L-methionine-binding positions include 139 to 145 (CAAPGGK), glutamate 162, aspartate 193, and aspartate 211. The Nucleophile role is filled by cysteine 265.

This sequence belongs to the class I-like SAM-binding methyltransferase superfamily. RsmB/NOP family.

Its subcellular location is the mitochondrion matrix. The enzyme catalyses cytidine(34) in mitochondrial tRNA + S-adenosyl-L-methionine = 5-methylcytidine(34) in mitochondrial tRNA + S-adenosyl-L-homocysteine + H(+). Functionally, mitochondrial tRNA methyltransferase that mediates methylation of cytosine to 5-methylcytosine (m5C) at position 34 of mt-tRNA(Met). mt-tRNA(Met) methylation at cytosine(34) takes place at the wobble position of the anticodon and initiates the formation of 5-formylcytosine (f(5)c) at this position. mt-tRNA(Met) containing the f(5)c modification at the wobble position enables recognition of the AUA codon in addition to the AUG codon, expanding codon recognition in mitochondrial translation. This Homo sapiens (Human) protein is tRNA (cytosine(34)-C(5))-methyltransferase, mitochondrial.